The chain runs to 416 residues: Tyrosine--tRNA ligase (416 aa).

L-tyrosine is bound at residue Y39. Residues 44–53 carry the 'HIGH' region motif; it reads CTASSLHVGS. Y176 and Q180 together coordinate L-tyrosine. The 'KMSKS' region motif lies at 236–240; that stretch reads KMGKT. K239 provides a ligand contact to ATP. Positions 349 to 415 constitute an S4 RNA-binding domain; sequence ISLIDLLHDI…GKKRHIKVMV (67 aa).

The protein belongs to the class-I aminoacyl-tRNA synthetase family. TyrS type 1 subfamily. As to quaternary structure, homodimer.

It is found in the cytoplasm. It carries out the reaction tRNA(Tyr) + L-tyrosine + ATP = L-tyrosyl-tRNA(Tyr) + AMP + diphosphate + H(+). In terms of biological role, catalyzes the attachment of tyrosine to tRNA(Tyr) in a two-step reaction: tyrosine is first activated by ATP to form Tyr-AMP and then transferred to the acceptor end of tRNA(Tyr). This is Tyrosine--tRNA ligase from Wolbachia sp. subsp. Brugia malayi (strain TRS).